The sequence spans 341 residues: Biotin synthase (341 aa).

A Radical SAM core domain is found at 40-267 (AEIQVSTLLS…RSMVRLSAGR (228 aa)). Positions 55, 59, and 62 each coordinate [4Fe-4S] cluster. [2Fe-2S] cluster contacts are provided by C99, C130, C190, and R262.

Belongs to the radical SAM superfamily. Biotin synthase family. As to quaternary structure, homodimer. Requires [4Fe-4S] cluster as cofactor. [2Fe-2S] cluster serves as cofactor.

It carries out the reaction (4R,5S)-dethiobiotin + (sulfur carrier)-SH + 2 reduced [2Fe-2S]-[ferredoxin] + 2 S-adenosyl-L-methionine = (sulfur carrier)-H + biotin + 2 5'-deoxyadenosine + 2 L-methionine + 2 oxidized [2Fe-2S]-[ferredoxin]. The protein operates within cofactor biosynthesis; biotin biosynthesis; biotin from 7,8-diaminononanoate: step 2/2. Its function is as follows. Catalyzes the conversion of dethiobiotin (DTB) to biotin by the insertion of a sulfur atom into dethiobiotin via a radical-based mechanism. This Xylella fastidiosa (strain 9a5c) protein is Biotin synthase.